The chain runs to 856 residues: DNA mismatch repair protein MutS (856 aa).

618–625 is a binding site for ATP; it reads GPNMGGKS.

It belongs to the DNA mismatch repair MutS family.

This protein is involved in the repair of mismatches in DNA. It is possible that it carries out the mismatch recognition step. This protein has a weak ATPase activity. This is DNA mismatch repair protein MutS from Shewanella baltica (strain OS155 / ATCC BAA-1091).